Consider the following 72-residue polypeptide: UPF0426 protein asl4034 (72 aa).

Belongs to the UPF0426 family.

The chain is UPF0426 protein asl4034 from Nostoc sp. (strain PCC 7120 / SAG 25.82 / UTEX 2576).